A 638-amino-acid chain; its full sequence is 1-deoxy-D-xylulose-5-phosphate synthase (638 aa).

Thiamine diphosphate is bound by residues His75 and 116-118 (AHS). A Mg(2+)-binding site is contributed by Asp147. Residues 148–149 (GA), Asn177, Tyr288, and Glu370 contribute to the thiamine diphosphate site. Residue Asn177 participates in Mg(2+) binding.

This sequence belongs to the transketolase family. DXPS subfamily. In terms of assembly, homodimer. It depends on Mg(2+) as a cofactor. Thiamine diphosphate serves as cofactor.

It catalyses the reaction D-glyceraldehyde 3-phosphate + pyruvate + H(+) = 1-deoxy-D-xylulose 5-phosphate + CO2. The protein operates within metabolic intermediate biosynthesis; 1-deoxy-D-xylulose 5-phosphate biosynthesis; 1-deoxy-D-xylulose 5-phosphate from D-glyceraldehyde 3-phosphate and pyruvate: step 1/1. Its function is as follows. Catalyzes the acyloin condensation reaction between C atoms 2 and 3 of pyruvate and glyceraldehyde 3-phosphate to yield 1-deoxy-D-xylulose-5-phosphate (DXP). This chain is 1-deoxy-D-xylulose-5-phosphate synthase, found in Cupriavidus pinatubonensis (strain JMP 134 / LMG 1197) (Cupriavidus necator (strain JMP 134)).